We begin with the raw amino-acid sequence, 468 residues long: ATP synthase subunit beta (468 aa).

Gly-155 to Thr-162 contributes to the ATP binding site.

This sequence belongs to the ATPase alpha/beta chains family. F-type ATPases have 2 components, CF(1) - the catalytic core - and CF(0) - the membrane proton channel. CF(1) has five subunits: alpha(3), beta(3), gamma(1), delta(1), epsilon(1). CF(0) has three main subunits: a(1), b(2) and c(9-12). The alpha and beta chains form an alternating ring which encloses part of the gamma chain. CF(1) is attached to CF(0) by a central stalk formed by the gamma and epsilon chains, while a peripheral stalk is formed by the delta and b chains.

It localises to the cell membrane. The enzyme catalyses ATP + H2O + 4 H(+)(in) = ADP + phosphate + 5 H(+)(out). Produces ATP from ADP in the presence of a proton gradient across the membrane. The catalytic sites are hosted primarily by the beta subunits. This chain is ATP synthase subunit beta, found in Streptococcus pneumoniae (strain CGSP14).